A 416-amino-acid polypeptide reads, in one-letter code: Tyrosine--tRNA ligase (416 aa).

Y39 is an L-tyrosine binding site. The 'HIGH' region signature appears at 44 to 53 (CTAPSLHAGH). Positions 176 and 180 each coordinate L-tyrosine. Positions 236 to 240 (KMGKT) match the 'KMSKS' region motif. An ATP-binding site is contributed by K239. One can recognise an S4 RNA-binding domain in the interval 349 to 414 (ISLVDLLHDT…AGKKRHIKVV (66 aa)).

Belongs to the class-I aminoacyl-tRNA synthetase family. TyrS type 1 subfamily. Homodimer.

It localises to the cytoplasm. It carries out the reaction tRNA(Tyr) + L-tyrosine + ATP = L-tyrosyl-tRNA(Tyr) + AMP + diphosphate + H(+). In terms of biological role, catalyzes the attachment of tyrosine to tRNA(Tyr) in a two-step reaction: tyrosine is first activated by ATP to form Tyr-AMP and then transferred to the acceptor end of tRNA(Tyr). This is Tyrosine--tRNA ligase from Wolbachia pipientis wMel.